Here is a 244-residue protein sequence, read N- to C-terminus: Pyridoxine 5'-phosphate synthase (244 aa).

A 3-amino-2-oxopropyl phosphate-binding site is contributed by Asn-9. 11 to 12 is a 1-deoxy-D-xylulose 5-phosphate binding site; that stretch reads DH. Arg-20 provides a ligand contact to 3-amino-2-oxopropyl phosphate. The active-site Proton acceptor is His-45. The 1-deoxy-D-xylulose 5-phosphate site is built by Arg-47 and His-52. Residue Glu-72 is the Proton acceptor of the active site. Thr-102 contributes to the 1-deoxy-D-xylulose 5-phosphate binding site. His-193 serves as the catalytic Proton donor. Residues Gly-194 and 215-216 contribute to the 3-amino-2-oxopropyl phosphate site; that span reads GH.

The protein belongs to the PNP synthase family. In terms of assembly, homooctamer; tetramer of dimers.

The protein resides in the cytoplasm. The catalysed reaction is 3-amino-2-oxopropyl phosphate + 1-deoxy-D-xylulose 5-phosphate = pyridoxine 5'-phosphate + phosphate + 2 H2O + H(+). The protein operates within cofactor biosynthesis; pyridoxine 5'-phosphate biosynthesis; pyridoxine 5'-phosphate from D-erythrose 4-phosphate: step 5/5. Functionally, catalyzes the complicated ring closure reaction between the two acyclic compounds 1-deoxy-D-xylulose-5-phosphate (DXP) and 3-amino-2-oxopropyl phosphate (1-amino-acetone-3-phosphate or AAP) to form pyridoxine 5'-phosphate (PNP) and inorganic phosphate. The polypeptide is Pyridoxine 5'-phosphate synthase (Blochmanniella pennsylvanica (strain BPEN)).